A 156-amino-acid chain; its full sequence is Cell division protein SepF (156 aa).

Basic and acidic residues predominate over residues 23 to 36; sequence SYEKEQTDMKKQQD. Residues 23 to 48 are disordered; sequence SYEKEQTDMKKQQDPPEQQDVTFPKA. Residues 37–48 are compositionally biased toward polar residues; the sequence is PPEQQDVTFPKA.

Belongs to the SepF family. In terms of assembly, homodimer. Interacts with FtsZ.

The protein resides in the cytoplasm. Cell division protein that is part of the divisome complex and is recruited early to the Z-ring. Probably stimulates Z-ring formation, perhaps through the cross-linking of FtsZ protofilaments. Its function overlaps with FtsA. In Bacillus cereus (strain ATCC 10987 / NRS 248), this protein is Cell division protein SepF.